Reading from the N-terminus, the 268-residue chain is 3-deoxy-manno-octulosonate cytidylyltransferase (268 aa).

This sequence belongs to the KdsB family.

Its subcellular location is the cytoplasm. It carries out the reaction 3-deoxy-alpha-D-manno-oct-2-ulosonate + CTP = CMP-3-deoxy-beta-D-manno-octulosonate + diphosphate. It participates in nucleotide-sugar biosynthesis; CMP-3-deoxy-D-manno-octulosonate biosynthesis; CMP-3-deoxy-D-manno-octulosonate from 3-deoxy-D-manno-octulosonate and CTP: step 1/1. The protein operates within bacterial outer membrane biogenesis; lipopolysaccharide biosynthesis. Activates KDO (a required 8-carbon sugar) for incorporation into bacterial lipopolysaccharide in Gram-negative bacteria. This Psychrobacter cryohalolentis (strain ATCC BAA-1226 / DSM 17306 / VKM B-2378 / K5) protein is 3-deoxy-manno-octulosonate cytidylyltransferase.